A 574-amino-acid chain; its full sequence is Ribonuclease Y (574 aa).

Residues 1–21 (MSLLDLVLLLLVLGLGGVLLL) form a helical membrane-spanning segment. Residues 264–327 (AVTVVPIPSD…EIARMALEEL (64 aa)) enclose the KH domain. One can recognise an HD domain in the interval 390–483 (VLKHSIQVAH…VAAADALSAA (94 aa)).

The protein belongs to the RNase Y family.

The protein localises to the cell membrane. Functionally, endoribonuclease that initiates mRNA decay. This is Ribonuclease Y from Thermus thermophilus (strain ATCC BAA-163 / DSM 7039 / HB27).